We begin with the raw amino-acid sequence, 482 residues long: Serine carboxypeptidase-like 36 (482 aa).

The first 25 residues, 1–25, serve as a signal peptide directing secretion; it reads MGKRQDWSVTACIFLFLSLASQIHC. 3 disulfide bridges follow: C119–C363, C275–C286, and C310–C331. Residue S210 is part of the active site. Residue N228 is glycosylated (N-linked (GlcNAc...) asparagine). Residues N312 and N352 are each glycosylated (N-linked (GlcNAc...) asparagine). The active site involves D402. Residues N418 and N444 are each glycosylated (N-linked (GlcNAc...) asparagine). H455 is a catalytic residue.

It belongs to the peptidase S10 family. In terms of tissue distribution, expressed in seedlings, flowers and siliques.

It is found in the secreted. Probable carboxypeptidase. The protein is Serine carboxypeptidase-like 36 (SCPL36) of Arabidopsis thaliana (Mouse-ear cress).